The primary structure comprises 98 residues: uncharacterized protein (98 aa).

This is an uncharacterized protein from Archaeoglobus fulgidus (strain ATCC 49558 / DSM 4304 / JCM 9628 / NBRC 100126 / VC-16).